Reading from the N-terminus, the 231-residue chain is MSNTPIELKGSSFTLSVVHLHEAEPKVIHQALKDKIAQAPTFLKHAPVVLNVSALEDPVNWSAMHKAVSATGLRVIGVSGCKDAQLKAEIEKMGLPILTEGKEKAPRPAPAPQAPAQNTMPVTKTRLIDTPVRSGQRIYAPQCDLIVTSHVSAGAELIADGNIHVYGMMRGRALAGASGDRETQIFCTNLMAELVSIAGEYWLSDQIPAEFYGKAARLQLVENALTVQPLN.

This sequence belongs to the MinC family. As to quaternary structure, interacts with MinD and FtsZ.

Cell division inhibitor that blocks the formation of polar Z ring septums. Rapidly oscillates between the poles of the cell to destabilize FtsZ filaments that have formed before they mature into polar Z rings. Prevents FtsZ polymerization. The protein is Septum site-determining protein MinC of Shigella flexneri.